A 125-amino-acid chain; its full sequence is Small ribosomal subunit protein eS8 (125 aa).

Belongs to the eukaryotic ribosomal protein eS8 family. In terms of assembly, part of the 30S ribosomal subunit.

In Methanosphaerula palustris (strain ATCC BAA-1556 / DSM 19958 / E1-9c), this protein is Small ribosomal subunit protein eS8.